The sequence spans 50 residues: Large ribosomal subunit protein bL33B (50 aa).

The protein belongs to the bacterial ribosomal protein bL33 family.

This is Large ribosomal subunit protein bL33B from Ligilactobacillus salivarius (strain UCC118) (Lactobacillus salivarius).